A 379-amino-acid chain; its full sequence is Chaperone protein DnaJ (379 aa).

The region spanning 5 to 70 (DYYEILEVSR…EKRAAYDRYG (66 aa)) is the J domain. The segment at 135 to 213 (GIKVPISYVT…CGGSGRVRNE (79 aa)) adopts a CR-type zinc-finger fold. Residues Cys-148, Cys-151, Cys-165, Cys-168, Cys-187, Cys-190, Cys-201, and Cys-204 each coordinate Zn(2+). CXXCXGXG motif repeat units follow at residues 148–155 (CSSCSGIG), 165–172 (CGNCNGAG), 187–194 (CNVCNGEG), and 201–208 (CRRCGGSG).

Belongs to the DnaJ family. In terms of assembly, homodimer. It depends on Zn(2+) as a cofactor.

Its subcellular location is the cytoplasm. In terms of biological role, participates actively in the response to hyperosmotic and heat shock by preventing the aggregation of stress-denatured proteins and by disaggregating proteins, also in an autonomous, DnaK-independent fashion. Unfolded proteins bind initially to DnaJ; upon interaction with the DnaJ-bound protein, DnaK hydrolyzes its bound ATP, resulting in the formation of a stable complex. GrpE releases ADP from DnaK; ATP binding to DnaK triggers the release of the substrate protein, thus completing the reaction cycle. Several rounds of ATP-dependent interactions between DnaJ, DnaK and GrpE are required for fully efficient folding. Also involved, together with DnaK and GrpE, in the DNA replication of plasmids through activation of initiation proteins. The protein is Chaperone protein DnaJ of Anaplasma marginale (strain Florida).